Here is an 801-residue protein sequence, read N- to C-terminus: Phenylalanine--tRNA ligase beta subunit (801 aa).

Residues 39–153 (AEGLSKLVVG…EGAIPGDSIF (115 aa)) enclose the tRNA-binding domain. The B5 domain occupies 406 to 481 (TEPVEVSTTL…RIYGYEKLPT (76 aa)). Residues Asp-459, Asp-465, Glu-468, and Glu-469 each contribute to the Mg(2+) site. In terms of domain architecture, FDX-ACB spans 708-801 (TKYPSVSRDI…LVEKVNAEIR (94 aa)).

The protein belongs to the phenylalanyl-tRNA synthetase beta subunit family. Type 1 subfamily. Tetramer of two alpha and two beta subunits. Mg(2+) is required as a cofactor.

It is found in the cytoplasm. It carries out the reaction tRNA(Phe) + L-phenylalanine + ATP = L-phenylalanyl-tRNA(Phe) + AMP + diphosphate + H(+). This Streptococcus agalactiae serotype Ia (strain ATCC 27591 / A909 / CDC SS700) protein is Phenylalanine--tRNA ligase beta subunit.